Reading from the N-terminus, the 254-residue chain is Ribonuclease PH (254 aa).

Phosphate is bound by residues R86 and 124–126 (GTR).

It belongs to the RNase PH family. As to quaternary structure, homohexameric ring arranged as a trimer of dimers.

The catalysed reaction is tRNA(n+1) + phosphate = tRNA(n) + a ribonucleoside 5'-diphosphate. Its function is as follows. Phosphorolytic 3'-5' exoribonuclease that plays an important role in tRNA 3'-end maturation. Removes nucleotide residues following the 3'-CCA terminus of tRNAs; can also add nucleotides to the ends of RNA molecules by using nucleoside diphosphates as substrates, but this may not be physiologically important. Probably plays a role in initiation of 16S rRNA degradation (leading to ribosome degradation) during starvation. The chain is Ribonuclease PH from Carboxydothermus hydrogenoformans (strain ATCC BAA-161 / DSM 6008 / Z-2901).